The chain runs to 256 residues: Tryptophan synthase alpha chain (256 aa).

Active-site proton acceptor residues include glutamate 44 and aspartate 55.

It belongs to the TrpA family. Tetramer of two alpha and two beta chains.

It carries out the reaction (1S,2R)-1-C-(indol-3-yl)glycerol 3-phosphate + L-serine = D-glyceraldehyde 3-phosphate + L-tryptophan + H2O. It functions in the pathway amino-acid biosynthesis; L-tryptophan biosynthesis; L-tryptophan from chorismate: step 5/5. Functionally, the alpha subunit is responsible for the aldol cleavage of indoleglycerol phosphate to indole and glyceraldehyde 3-phosphate. The polypeptide is Tryptophan synthase alpha chain (Coxiella burnetii (strain CbuK_Q154) (Coxiella burnetii (strain Q154))).